We begin with the raw amino-acid sequence, 474 residues long: NAD(P) transhydrogenase subunit beta (474 aa).

The next 9 helical transmembrane spans lie at 4-24 (GLVQ…LAGL), 46-66 (IATI…AMII), 83-103 (MPEL…LVGF), 132-152 (VLTN…AVTF), 181-200 (LAAL…NPES), 202-222 (FPVL…VASI), 229-249 (VVVS…GFIL), 253-273 (LLIV…YIMC), and 321-341 (VIIT…VADI).

It belongs to the PNT beta subunit family. As to quaternary structure, heterodimer of an alpha and a beta chain.

Its subcellular location is the cell inner membrane. The catalysed reaction is NAD(+) + NADPH + H(+)(in) = NADH + NADP(+) + H(+)(out). In terms of biological role, the transhydrogenation between NADH and NADP is coupled to respiration and ATP hydrolysis and functions as a proton pump across the membrane. The sequence is that of NAD(P) transhydrogenase subunit beta (pntB) from Haemophilus influenzae (strain ATCC 51907 / DSM 11121 / KW20 / Rd).